A 286-amino-acid polypeptide reads, in one-letter code: 4-hydroxybenzoate octaprenyltransferase (286 aa).

A run of 7 helical transmembrane segments spans residues 20–40, 43–63, 83–103, 135–155, 160–180, 209–229, and 234–254; these read IGIL…ADGM, PMIL…GCAI, LATG…LSLC, FFAM…PMAF, GTVP…VIAY, VAGI…AGIL, and IWFY…YTMI.

It belongs to the UbiA prenyltransferase family. It depends on Mg(2+) as a cofactor.

It localises to the cell inner membrane. It carries out the reaction all-trans-octaprenyl diphosphate + 4-hydroxybenzoate = 4-hydroxy-3-(all-trans-octaprenyl)benzoate + diphosphate. It participates in cofactor biosynthesis; ubiquinone biosynthesis. Catalyzes the prenylation of para-hydroxybenzoate (PHB) with an all-trans polyprenyl group. Mediates the second step in the final reaction sequence of ubiquinone-8 (UQ-8) biosynthesis, which is the condensation of the polyisoprenoid side chain with PHB, generating the first membrane-bound Q intermediate 3-octaprenyl-4-hydroxybenzoate. In Nitrosomonas eutropha (strain DSM 101675 / C91 / Nm57), this protein is 4-hydroxybenzoate octaprenyltransferase.